A 246-amino-acid polypeptide reads, in one-letter code: Metallo-beta-lactamase type 2 (246 aa).

The first 20 residues, 1–20 (MKKLFVLCVCFFCSITAAGA), serve as a signal peptide directing secretion. The Zn(2+) site is built by His-95, His-97, Asp-99, His-157, and Cys-176. Position 99 (Asp-99) interacts with a beta-lactam. Residues Lys-179 and Asn-185 each coordinate a beta-lactam. His-215 contributes to the Zn(2+) binding site.

It belongs to the metallo-beta-lactamase superfamily. Class-B beta-lactamase family. Monomer. Zn(2+) serves as cofactor.

Its subcellular location is the periplasm. It catalyses the reaction a beta-lactam + H2O = a substituted beta-amino acid. Confers resistance to the different beta-lactam antibiotics (penicillin, cephalosporin and carbapenem) via the hydrolysis of the beta-lactam ring. Exhibits higher catalytic efficiency toward ticarcillin and piperacillin than blaIMP-1. Exhibits catalytic activity for carbapenem compounds, but has a preference for imipenem and ertapenem over meropenem. Has high efficiency for the hydrolysis of cefuroxime. Exhibits hydrolysis of all cephalosporins tested. Exhibits no hydrolysis of temocillin, the 6-alpha-methoxy semisynthetic derivative of ticarcillin. The polypeptide is Metallo-beta-lactamase type 2 (Pseudomonas aeruginosa).